Consider the following 324-residue polypeptide: Glyoxylate/hydroxypyruvate reductase B (324 aa).

Residues R237 and E266 contribute to the active site. Catalysis depends on H285, which acts as the Proton donor.

This sequence belongs to the D-isomer specific 2-hydroxyacid dehydrogenase family. GhrB subfamily. Homodimer.

It localises to the cytoplasm. The enzyme catalyses glycolate + NADP(+) = glyoxylate + NADPH + H(+). It carries out the reaction (R)-glycerate + NAD(+) = 3-hydroxypyruvate + NADH + H(+). The catalysed reaction is (R)-glycerate + NADP(+) = 3-hydroxypyruvate + NADPH + H(+). Functionally, catalyzes the NADPH-dependent reduction of glyoxylate and hydroxypyruvate into glycolate and glycerate, respectively. The chain is Glyoxylate/hydroxypyruvate reductase B from Shigella sonnei (strain Ss046).